The following is a 123-amino-acid chain: Probable cytochrome c 2.2 (123 aa).

A disordered region spans residues 1–21; that stretch reads MGKKKSDTASGGAIPEGDNEK. 4 residues coordinate heme c: C30, C33, H34, and M95.

It belongs to the cytochrome c family. Post-translationally, binds 1 heme c group covalently per subunit.

It localises to the mitochondrion intermembrane space. Its function is as follows. Electron carrier protein. The oxidized form of the cytochrome c heme group can accept an electron from the heme group of the cytochrome c1 subunit of cytochrome reductase. Cytochrome c then transfers this electron to the cytochrome oxidase complex, the final protein carrier in the mitochondrial electron-transport chain. In Caenorhabditis elegans, this protein is Probable cytochrome c 2.2 (cyc-2.2).